The following is a 433-amino-acid chain: Signal recognition particle 54 kDa protein (433 aa).

GTP is bound by residues 106 to 113 (GVEGSGKT), 186 to 190 (DTAGR), and 244 to 247 (TKMD).

This sequence belongs to the GTP-binding SRP family. SRP54 subfamily. Part of the signal recognition particle protein translocation system, which is composed of SRP and FtsY. Archaeal SRP consists of a 7S RNA molecule of 300 nucleotides and two protein subunits: SRP54 and SRP19.

It is found in the cytoplasm. The catalysed reaction is GTP + H2O = GDP + phosphate + H(+). Involved in targeting and insertion of nascent membrane proteins into the cytoplasmic membrane. Binds to the hydrophobic signal sequence of the ribosome-nascent chain (RNC) as it emerges from the ribosomes. The SRP-RNC complex is then targeted to the cytoplasmic membrane where it interacts with the SRP receptor FtsY. In Pyrobaculum islandicum (strain DSM 4184 / JCM 9189 / GEO3), this protein is Signal recognition particle 54 kDa protein.